The sequence spans 201 residues: Histidine biosynthesis bifunctional protein HisIE (201 aa).

The tract at residues 1–114 is phosphoribosyl-AMP cyclohydrolase; it reads MLTAQQIEKL…FAPAQTEWGF (114 aa). The interval 115–201 is phosphoribosyl-ATP pyrophosphohydrolase; the sequence is LYQLEKLLAS…SCVIRRLRER (87 aa).

In the N-terminal section; belongs to the PRA-CH family. The protein in the C-terminal section; belongs to the PRA-PH family.

The protein resides in the cytoplasm. The catalysed reaction is 1-(5-phospho-beta-D-ribosyl)-ATP + H2O = 1-(5-phospho-beta-D-ribosyl)-5'-AMP + diphosphate + H(+). It catalyses the reaction 1-(5-phospho-beta-D-ribosyl)-5'-AMP + H2O = 1-(5-phospho-beta-D-ribosyl)-5-[(5-phospho-beta-D-ribosylamino)methylideneamino]imidazole-4-carboxamide. It participates in amino-acid biosynthesis; L-histidine biosynthesis; L-histidine from 5-phospho-alpha-D-ribose 1-diphosphate: step 2/9. Its pathway is amino-acid biosynthesis; L-histidine biosynthesis; L-histidine from 5-phospho-alpha-D-ribose 1-diphosphate: step 3/9. The sequence is that of Histidine biosynthesis bifunctional protein HisIE from Photorhabdus laumondii subsp. laumondii (strain DSM 15139 / CIP 105565 / TT01) (Photorhabdus luminescens subsp. laumondii).